We begin with the raw amino-acid sequence, 244 residues long: Phosphatidylserine decarboxylase proenzyme (244 aa).

Catalysis depends on Ser212, which acts as the Schiff-base intermediate with substrate; via pyruvic acid. Pyruvic acid (Ser); by autocatalysis is present on Ser212.

Belongs to the phosphatidylserine decarboxylase family. PSD-A subfamily. Heterodimer of a large membrane-associated beta subunit and a small pyruvoyl-containing alpha subunit. The cofactor is pyruvate. Is synthesized initially as an inactive proenzyme. Formation of the active enzyme involves a self-maturation process in which the active site pyruvoyl group is generated from an internal serine residue via an autocatalytic post-translational modification. Two non-identical subunits are generated from the proenzyme in this reaction, and the pyruvate is formed at the N-terminus of the alpha chain, which is derived from the carboxyl end of the proenzyme. The post-translation cleavage follows an unusual pathway, termed non-hydrolytic serinolysis, in which the side chain hydroxyl group of the serine supplies its oxygen atom to form the C-terminus of the beta chain, while the remainder of the serine residue undergoes an oxidative deamination to produce ammonia and the pyruvoyl prosthetic group on the alpha chain.

Its subcellular location is the cell membrane. It carries out the reaction a 1,2-diacyl-sn-glycero-3-phospho-L-serine + H(+) = a 1,2-diacyl-sn-glycero-3-phosphoethanolamine + CO2. The protein operates within phospholipid metabolism; phosphatidylethanolamine biosynthesis; phosphatidylethanolamine from CDP-diacylglycerol: step 2/2. Catalyzes the formation of phosphatidylethanolamine (PtdEtn) from phosphatidylserine (PtdSer). The polypeptide is Phosphatidylserine decarboxylase proenzyme (Granulibacter bethesdensis (strain ATCC BAA-1260 / CGDNIH1)).